A 312-amino-acid polypeptide reads, in one-letter code: Malate dehydrogenase (312 aa).

Residues 12–17 (GAGFTG) and D36 contribute to the NAD(+) site. 2 residues coordinate substrate: R87 and R93. Residues N100 and 123-125 (LTN) each bind NAD(+). N125 is a binding site for substrate. A Phosphoserine modification is found at S149. R156 lines the substrate pocket. The Proton acceptor role is filled by H180.

The protein belongs to the LDH/MDH superfamily. MDH type 3 family.

The enzyme catalyses (S)-malate + NAD(+) = oxaloacetate + NADH + H(+). Functionally, catalyzes the reversible oxidation of malate to oxaloacetate. The chain is Malate dehydrogenase from Bacillus mycoides (strain KBAB4) (Bacillus weihenstephanensis).